The sequence spans 274 residues: Large ribosomal subunit protein uL2 (274 aa).

The interval V223–Y256 is disordered.

The protein belongs to the universal ribosomal protein uL2 family. Part of the 50S ribosomal subunit. Forms a bridge to the 30S subunit in the 70S ribosome.

Its function is as follows. One of the primary rRNA binding proteins. Required for association of the 30S and 50S subunits to form the 70S ribosome, for tRNA binding and peptide bond formation. It has been suggested to have peptidyltransferase activity; this is somewhat controversial. Makes several contacts with the 16S rRNA in the 70S ribosome. The polypeptide is Large ribosomal subunit protein uL2 (Trichlorobacter lovleyi (strain ATCC BAA-1151 / DSM 17278 / SZ) (Geobacter lovleyi)).